The primary structure comprises 295 residues: GTPase Era (295 aa).

The 170-residue stretch at 7 to 176 folds into the Era-type G domain; it reads KTISVCIIGR…IKSKAKVSPW (170 aa). The interval 15–22 is G1; it reads GRPNSGKS. Residue 15–22 participates in GTP binding; the sequence is GRPNSGKS. The G2 stretch occupies residues 41-45; that stretch reads QTTRS. Residues 62 to 65 form a G3 region; sequence DTPG. Residues 62–66 and 124–127 contribute to the GTP site; these read DTPGI and NKID. Residues 124–127 are G4; it reads NKID. The G5 stretch occupies residues 152–154; that stretch reads ISA. One can recognise a KH type-2 domain in the interval 204 to 281; the sequence is LQQELPYKLT…HLFLFVKVHA (78 aa).

Belongs to the TRAFAC class TrmE-Era-EngA-EngB-Septin-like GTPase superfamily. Era GTPase family. In terms of assembly, monomer.

The protein localises to the cytoplasm. The protein resides in the cell inner membrane. Its function is as follows. An essential GTPase that binds both GDP and GTP, with rapid nucleotide exchange. Plays a role in 16S rRNA processing and 30S ribosomal subunit biogenesis and possibly also in cell cycle regulation and energy metabolism. This Rickettsia prowazekii (strain Madrid E) protein is GTPase Era.